A 254-amino-acid chain; its full sequence is 5'-nucleotidase SurE (254 aa).

A divalent metal cation is bound by residues D8, D9, S40, and N93.

The protein belongs to the SurE nucleotidase family. A divalent metal cation is required as a cofactor.

The protein localises to the cytoplasm. The enzyme catalyses a ribonucleoside 5'-phosphate + H2O = a ribonucleoside + phosphate. In terms of biological role, nucleotidase that shows phosphatase activity on nucleoside 5'-monophosphates. This chain is 5'-nucleotidase SurE, found in Actinobacillus pleuropneumoniae serotype 5b (strain L20).